A 408-amino-acid chain; its full sequence is NADH-quinone oxidoreductase subunit D (408 aa).

This sequence belongs to the complex I 49 kDa subunit family. NDH-1 is composed of 14 different subunits. Subunits NuoB, C, D, E, F, and G constitute the peripheral sector of the complex.

It is found in the cell inner membrane. It carries out the reaction a quinone + NADH + 5 H(+)(in) = a quinol + NAD(+) + 4 H(+)(out). NDH-1 shuttles electrons from NADH, via FMN and iron-sulfur (Fe-S) centers, to quinones in the respiratory chain. The immediate electron acceptor for the enzyme in this species is believed to be ubiquinone. Couples the redox reaction to proton translocation (for every two electrons transferred, four hydrogen ions are translocated across the cytoplasmic membrane), and thus conserves the redox energy in a proton gradient. This Campylobacter hominis (strain ATCC BAA-381 / DSM 21671 / CCUG 45161 / LMG 19568 / NCTC 13146 / CH001A) protein is NADH-quinone oxidoreductase subunit D.